A 704-amino-acid chain; its full sequence is MIQNEVSATHGSTKKGITYNTILEAAQRPTPLVPLKKLKVEHQLQSDIYVKLEYLNIAGSLEDRTADKAFQFAEEIGVVRGDEVFVTAGGSAAISYATVAAVKGIKLTIYAPKGEFDLVDTVLHTLGVKTVELPFGTFAEARVQTDEAAQQKGVFSLNKFTTNAAFVANLQKTALEIEKAVNNKSIGKVGAVVIPLNTGAAAAGIAAYYKGIGEHGVRVVGVTCKKDTIPEMGLDLKNDLLQEYNVEKREVEEDEAYSFTRHLIGTEGIMAGPSSGAAVLEAIKLAKELPAGSTIVVVLMDGIRNYLRHFLDDDWITANKKDVVTRKDGPQPNSIYDPKVLVYDPTKLAGEWTQDPETKSWSHSEVEFNKFNPERPLVLDTVLDAIGKTPLVKLQHIPKAHGVKCNVYVKCEYMNAGGSTKDRIAKRMVEIAEKTGKPGKLVPGVTLIEPTSGNTGIGLSLASAVRGYKCIITMPKKMSKEKSIAMASLGSTIIRTPNEAGFDSPHSHIGVALRLKSEIQDAVVLDQYCNPGNPLAHYEETAEEIIYDMGDKHIDLVVLTAGTGGTVTGISRKIHERIPTAKVVGVDPHGSILAGPAETDIDFYEVEGIGYDFLPGTLDTSAIDYWAKSHDKESFLMARELIRSEGILCGGSSGCAVHYALEECKSLNLPAEANVVVLLPDGIRNYITKFLDDDWMNERHFLDA.

Pyridoxal 5'-phosphate contacts are provided by residues asparagine 454, 562-566, and serine 652; that span reads GTGGT.

It belongs to the cysteine synthase/cystathionine beta-synthase family. As to quaternary structure, monomer. In terms of assembly, does not bind pyridoxal 5'-phosphate, PLP; which may explain why this isoform has virtually undetectable catalytic activity. Requires pyridoxal 5'-phosphate as cofactor.

Its subcellular location is the cytoplasm. The catalysed reaction is L-homocysteine + L-serine = L,L-cystathionine + H2O. It participates in amino-acid biosynthesis; L-cysteine biosynthesis; L-cysteine from L-homocysteine and L-serine: step 1/2. In terms of biological role, hydro-lyase catalyzing the first step of the transsulfuration pathway, where the hydroxyl group of L-serine is displaced by L-homocysteine in a beta-replacement reaction to form L-cystathionine, the precursor of L-cysteine. Plays a role in maintaining homocysteine homeostasis. Involved in cold-induced somatic longevity mediated by prostaglandin E2 (PGE2) signals from adult germ cells, perhaps acting via a role in the production of hydrogen sulfide (H2S). Required for normal development. This is Cystathionine beta-synthase cbs-1 from Caenorhabditis elegans.